We begin with the raw amino-acid sequence, 108 residues long: Iron-sulfur cluster assembly protein CyaY (108 aa).

Belongs to the frataxin family.

Functionally, involved in iron-sulfur (Fe-S) cluster assembly. May act as a regulator of Fe-S biogenesis. The protein is Iron-sulfur cluster assembly protein CyaY of Burkholderia mallei (strain NCTC 10247).